The sequence spans 180 residues: Capsid assembly scaffolding protein (180 aa).

The protein belongs to the SPP1-like scaffolding protein family. As to quaternary structure, homodimer.

Scaffolding protein involved in the icosahedric procapsid assembly. Coassembles with the capsid proteins to form the procapsid, in which the scaffolding protein is found within the external shell of icosahedrally arranged capsid protein subunits. In a subsequent step the scaffolding protein molecules are released from the procapsid. The protein is Capsid assembly scaffolding protein (g20) of Lactococcus phage mv4 (Lactococcus delbrueckii bacteriophage mv4).